The chain runs to 235 residues: Claudin-16 (235 aa).

At 1 to 3 (MKD) the chain is on the cytoplasmic side. The chain crosses the membrane as a helical span at residues 4–24 (LLQYAACFLAIFSTGFLIVAT). At 25–79 (WTDCWMVNADDSLEVSTKCRGLWWECVTNAFDGIRTCDEYDSIYAEHPLKLVVTR) the chain is on the extracellular side. Residues 80–100 (ALMITADILAGFGFITLLLGL) traverse the membrane as a helical segment. Topologically, residues 101–115 (DCVKFLPDDPQIKVR) are cytoplasmic. A helical transmembrane segment spans residues 116-136 (LCFVAGTTLLIAGTPGIIGSV). At 137 to 169 (WYAVDVYVERSSLVLHNIFLGIQYKFGWSCWLG) the chain is on the extracellular side. A helical membrane pass occupies residues 170-190 (MAGSLGCFLAGALLTCCLYLF). Residues 191–235 (KDVGPERNYPYAMRKPYSTAGVSMAKSYKAPRTETAKMYAVDTRV) lie on the Cytoplasmic side of the membrane. The Interaction with TJP1 signature appears at 233 to 235 (TRV).

Belongs to the claudin family. Can form heteropolymeric tight junction strands with other claudins. Interacts with CLDN19. Cannot form tight junction strands on its own. Interacts (via PDZ-binding motif TRV) with TJP1 (via PDZ domain). Expressed in the corticomedullary axis of the TAL, specifically in the cortex and the outer stripe of outer medulla (OSOM) zone (at protein level).

The protein localises to the cell junction. It is found in the tight junction. The protein resides in the cell membrane. It carries out the reaction Mg(2+)(in) = Mg(2+)(out). The enzyme catalyses Ca(2+)(in) = Ca(2+)(out). The catalysed reaction is Na(+)(in) = Na(+)(out). It catalyses the reaction K(+)(in) = K(+)(out). It carries out the reaction Rb(+)(in) = Rb(+)(out). The enzyme catalyses Cs(+)(in) = Cs(+)(out). The catalysed reaction is Li(+)(in) = Li(+)(out). In terms of biological role, forms paracellular channels: coassembles with CLDN19 into tight junction strands with cation-selective channels through the strands, conveying epithelial permeability in a process known as paracellular tight junction permeability. Involved in the maintenance of ion gradients along the nephron. In the thick ascending limb (TAL) of Henle's loop, facilitates sodium paracellular permeability from the interstitial compartment to the lumen, contributing to the lumen-positive transepithelial potential that drives paracellular magnesium and calcium reabsorption. The protein is Claudin-16 of Mus musculus (Mouse).